Reading from the N-terminus, the 206-residue chain is 2-phospho-L-lactate guanylyltransferase (206 aa).

Belongs to the CofC family. As to quaternary structure, homodimer.

The catalysed reaction is (2S)-2-phospholactate + GTP + H(+) = (2S)-lactyl-2-diphospho-5'-guanosine + diphosphate. It participates in cofactor biosynthesis; coenzyme F420 biosynthesis. Its function is as follows. Guanylyltransferase that catalyzes the activation of (2S)-2-phospholactate (2-PL) as (2S)-lactyl-2-diphospho-5'-guanosine, via the condensation of 2-PL with GTP. It is involved in the biosynthesis of coenzyme F420, a hydride carrier cofactor. The protein is 2-phospho-L-lactate guanylyltransferase of Archaeoglobus fulgidus (strain ATCC 49558 / DSM 4304 / JCM 9628 / NBRC 100126 / VC-16).